The following is a 182-amino-acid chain: Probable RNA 2'-phosphotransferase (182 aa).

Belongs to the KptA/TPT1 family.

In terms of biological role, removes the 2'-phosphate from RNA via an intermediate in which the phosphate is ADP-ribosylated by NAD followed by a presumed transesterification to release the RNA and generate ADP-ribose 1''-2''-cyclic phosphate (APPR&gt;P). May function as an ADP-ribosylase. This is Probable RNA 2'-phosphotransferase from Pseudomonas fluorescens (strain ATCC BAA-477 / NRRL B-23932 / Pf-5).